Here is a 326-residue protein sequence, read N- to C-terminus: tRNA-dihydrouridine(20a/20b) synthase [NAD(P)+] (326 aa).

Residues 26-28 and glutamine 79 each bind FMN; that span reads PMV. Cysteine 108 functions as the Proton donor in the catalytic mechanism. FMN-binding positions include lysine 149, histidine 177, 208–210, and 232–233; these read NGD and AR.

Belongs to the Dus family. Dus4 subfamily. Requires FMN as cofactor.

It localises to the mitochondrion. The catalysed reaction is 5,6-dihydrouridine(20a) in tRNA + NADP(+) = uridine(20a) in tRNA + NADPH + H(+). It carries out the reaction 5,6-dihydrouridine(20a) in tRNA + NAD(+) = uridine(20a) in tRNA + NADH + H(+). The enzyme catalyses 5,6-dihydrouridine(20b) in tRNA + NAD(+) = uridine(20b) in tRNA + NADH + H(+). It catalyses the reaction 5,6-dihydrouridine(20b) in tRNA + NADP(+) = uridine(20b) in tRNA + NADPH + H(+). The catalysed reaction is a 5,6-dihydrouridine in mRNA + NAD(+) = a uridine in mRNA + NADH + H(+). It carries out the reaction a 5,6-dihydrouridine in mRNA + NADP(+) = a uridine in mRNA + NADPH + H(+). Functionally, catalyzes the synthesis of dihydrouridine, a modified base found in the D-loop of most tRNAs. Also able to mediate dihydrouridylation of some mRNAs, thereby affecting their translation. This Schizosaccharomyces pombe (strain 972 / ATCC 24843) (Fission yeast) protein is tRNA-dihydrouridine(20a/20b) synthase [NAD(P)+].